We begin with the raw amino-acid sequence, 208 residues long: Thymidylate kinase (208 aa).

ATP is bound at residue 10-17 (GPDGSGKT).

It belongs to the thymidylate kinase family.

It catalyses the reaction dTMP + ATP = dTDP + ADP. In terms of biological role, phosphorylation of dTMP to form dTDP in both de novo and salvage pathways of dTTP synthesis. The chain is Thymidylate kinase from Listeria monocytogenes serotype 4a (strain HCC23).